A 158-amino-acid chain; its full sequence is Transcription elongation factor GreA (158 aa).

Positions 46 to 66 form a coiled coil; that stretch reads AEYEAAKERQGFIEGRISELE.

Belongs to the GreA/GreB family.

Functionally, necessary for efficient RNA polymerase transcription elongation past template-encoded arresting sites. The arresting sites in DNA have the property of trapping a certain fraction of elongating RNA polymerases that pass through, resulting in locked ternary complexes. Cleavage of the nascent transcript by cleavage factors such as GreA or GreB allows the resumption of elongation from the new 3'terminus. GreA releases sequences of 2 to 3 nucleotides. In Neisseria meningitidis serogroup A / serotype 4A (strain DSM 15465 / Z2491), this protein is Transcription elongation factor GreA.